Consider the following 489-residue polypeptide: FAD-containing monooxygenase EthA (489 aa).

Residues S15, E36, 44-47, D56, and V104 each bind FAD; that span reads TWDL. Position 54–56 (54–56) interacts with NADP(+); sequence RSD. Residues 183–189 and 207–208 each bind NADP(+); these read SGATAVT and RS.

It belongs to the FAD-binding monooxygenase family. The cofactor is FAD.

It localises to the cell membrane. The catalysed reaction is ethionamide + NADPH + O2 + H(+) = ethionamide S-oxide + NADP(+) + H2O. Its function is as follows. Monooxygenase able to convert a wide range of ketones to the corresponding esters or lactones via a Baeyer-Villiger oxidation reaction. Can act on long-chain aliphatic ketones (2-hexanone to 2-dodecanone) and on aromatic ketones (phenylacetone and benzylacetone). Is also able to catalyze enantioselective sulfoxidation of methyl-p-tolylsulfide. In vivo, likely functions as a BVMO, but the exact nature of the physiological substrate(s) remains to be established. Functionally, is responsible for the activation of several thiocarbamide-containing pro-drugs, such as ethionamide (ETH), isoxyl (ISO) and thiacetazone (TAC), into reactive species. In Mycobacterium bovis (strain ATCC BAA-935 / AF2122/97), this protein is FAD-containing monooxygenase EthA (ethA).